Reading from the N-terminus, the 129-residue chain is Lysozyme C (129 aa).

Residues 1-129 (KIYKRCELAA…VSTWIKDCKL (129 aa)) enclose the C-type lysozyme domain. 4 disulfide bridges follow: Cys6–Cys127, Cys30–Cys115, Cys64–Cys80, and Cys76–Cys94. Active-site residues include Glu35 and Asp52.

The protein belongs to the glycosyl hydrolase 22 family. As to quaternary structure, monomer.

It localises to the secreted. The enzyme catalyses Hydrolysis of (1-&gt;4)-beta-linkages between N-acetylmuramic acid and N-acetyl-D-glucosamine residues in a peptidoglycan and between N-acetyl-D-glucosamine residues in chitodextrins.. Lysozymes have primarily a bacteriolytic function; those in tissues and body fluids are associated with the monocyte-macrophage system and enhance the activity of immunoagents. The chain is Lysozyme C (LYZ) from Ortalis vetula (Plain chachalaca).